Here is a 92-residue protein sequence, read N- to C-terminus: Small ribosomal subunit protein bS20 (92 aa).

Positions 1–23 are disordered; that stretch reads MANTPSAKKRAKQAEKRRSHNAS. A compositionally biased stretch (basic residues) spans 7–20; the sequence is AKKRAKQAEKRRSH.

Belongs to the bacterial ribosomal protein bS20 family.

In terms of biological role, binds directly to 16S ribosomal RNA. The protein is Small ribosomal subunit protein bS20 of Pseudomonas fluorescens (strain SBW25).